The primary structure comprises 528 residues: G protein-coupled receptor 161 (528 aa).

Over 1-30 (MSLNSSLGHRKELSNLTEGASDQGGSGVTE) the chain is Extracellular. 2 N-linked (GlcNAc...) asparagine glycosylation sites follow: Asn-4 and Asn-15. Residues 31 to 51 (FVAIVIITVFVCLGNLVIVIT) traverse the membrane as a helical segment. The Cytoplasmic portion of the chain corresponds to 52 to 64 (LYRKSYLLTLSNK). The chain crosses the membrane as a helical span at residues 65–85 (FVFSLTLSNFLLSVLVLPFVV). Topologically, residues 86–101 (TSSIRREWIFGVVWCN) are extracellular. A disulfide bond links Cys-100 and Cys-178. Asn-101 is a glycosylation site (N-linked (GlcNAc...) asparagine). Residues 102-122 (FSALLYLLISSASMLTLGIIA) form a helical membrane-spanning segment. Residues 123-143 (VDRYYAVLYPMAYPMKITGNR) are Cytoplasmic-facing. The chain crosses the membrane as a helical span at residues 144 to 164 (AVMVLAYIWLHSLIGCLPPLF). At 165–190 (GWSSVEFDEFKWMCVAAWHREPGYTA) the chain is on the extracellular side. Residues 191-211 (FWQIWCALLPFLVMLVCYGFI) traverse the membrane as a helical segment. Residues 212 to 269 (FRVARVKARKVHCGAVVTVEVGVQRTGRKNSSTSTSSSGSRKSAFQGVVYSANQCKAL) lie on the Cytoplasmic side of the membrane. The chain crosses the membrane as a helical span at residues 270–290 (VTILVVIGAFMVTWGPYMVVI). Topologically, residues 291-306 (TSEALWGKNCVSPTLE) are extracellular. A helical transmembrane segment spans residues 307-327 (TWATWLSFTSAICHPLIYGLW). At 328–528 (NKTVRKELLG…EGDVLATEQR (201 aa)) the chain is on the cytoplasmic side.

It belongs to the G-protein coupled receptor 1 family.

The protein localises to the cell projection. The protein resides in the cilium membrane. It is found in the cell membrane. In terms of biological role, key negative regulator of Shh signaling, which promotes the processing of GLI3 into GLI3R during neural tube development. Recruited by TULP3 and the IFT-A complex to primary cilia and acts as a regulator of the PKA-dependent basal repression machinery in Shh signaling by increasing cAMP levels, leading to promote the PKA-dependent processing of GLI3 into GLI3R and repress the Shh signaling. In presence of SHH, it is removed from primary cilia and is internalized into recycling endosomes, preventing its activity and allowing activation of the Shh signaling. Its ligand is unknown. The sequence is that of G protein-coupled receptor 161 (GPR161) from Bos taurus (Bovine).